The sequence spans 501 residues: Lysine--tRNA ligase (501 aa).

Residues Glu-411 and Glu-418 each contribute to the Mg(2+) site.

The protein belongs to the class-II aminoacyl-tRNA synthetase family. As to quaternary structure, homodimer. Mg(2+) serves as cofactor.

It is found in the cytoplasm. The catalysed reaction is tRNA(Lys) + L-lysine + ATP = L-lysyl-tRNA(Lys) + AMP + diphosphate. This Clostridium perfringens (strain ATCC 13124 / DSM 756 / JCM 1290 / NCIMB 6125 / NCTC 8237 / Type A) protein is Lysine--tRNA ligase.